A 1295-amino-acid chain; its full sequence is Phosphoribosylformylglycinamidine synthase (1295 aa).

The segment at 305–327 is disordered; it reads WPGAATGSGGEIRDEGATGRGAK. Residues 307 to 318, 386 to 388, and Ala678 contribute to the ATP site; these read GAATGSGGEIRD and TGY. Positions 679, 718, 722, and 884 each coordinate Mg(2+). ATP is bound at residue Ser886. Residues 1042–1295 form the Glutamine amidotransferase type-1 domain; that stretch reads VAVLREQGVN…IFRNARKQLG (254 aa). Cys1135 serves as the catalytic Nucleophile. Active-site residues include His1260 and Glu1262.

It in the N-terminal section; belongs to the FGAMS family. Monomer.

It localises to the cytoplasm. The catalysed reaction is N(2)-formyl-N(1)-(5-phospho-beta-D-ribosyl)glycinamide + L-glutamine + ATP + H2O = 2-formamido-N(1)-(5-O-phospho-beta-D-ribosyl)acetamidine + L-glutamate + ADP + phosphate + H(+). It participates in purine metabolism; IMP biosynthesis via de novo pathway; 5-amino-1-(5-phospho-D-ribosyl)imidazole from N(2)-formyl-N(1)-(5-phospho-D-ribosyl)glycinamide: step 1/2. In terms of biological role, phosphoribosylformylglycinamidine synthase involved in the purines biosynthetic pathway. Catalyzes the ATP-dependent conversion of formylglycinamide ribonucleotide (FGAR) and glutamine to yield formylglycinamidine ribonucleotide (FGAM) and glutamate. This is Phosphoribosylformylglycinamidine synthase from Salmonella typhimurium (strain LT2 / SGSC1412 / ATCC 700720).